Reading from the N-terminus, the 282-residue chain is Bis(5'-nucleosyl)-tetraphosphatase, symmetrical (282 aa).

This sequence belongs to the Ap4A hydrolase family.

The catalysed reaction is P(1),P(4)-bis(5'-adenosyl) tetraphosphate + H2O = 2 ADP + 2 H(+). Functionally, hydrolyzes diadenosine 5',5'''-P1,P4-tetraphosphate to yield ADP. This Escherichia coli O7:K1 (strain IAI39 / ExPEC) protein is Bis(5'-nucleosyl)-tetraphosphatase, symmetrical.